The primary structure comprises 261 residues: uncharacterized protein (261 aa).

Belongs to the BtpA family.

This is an uncharacterized protein from Thermococcus kodakarensis (strain ATCC BAA-918 / JCM 12380 / KOD1) (Pyrococcus kodakaraensis (strain KOD1)).